The sequence spans 240 residues: MLLGVNIDHVATLRQARGTRYPDPVKAALDAEEAGADGITVHLREDRRHIQERDVVLLKDVLQTRMNFEMGVTEEMMAFAEKIRPAHICLVPETRQELTTEGGLDVAGQEARIKAAVERLARTGAEVSLFIDADERQIEASRRVGAPAIELHTGRYADAETPTEVAEELQRIVEGVAFGVGHGLIVNAGHGLHYHNVEAVAAIKGINELNIGHALVAHALFVGFKAAVAEMKALIVAASR.

Asn-6 is a binding site for 3-amino-2-oxopropyl phosphate. 8–9 (DH) contacts 1-deoxy-D-xylulose 5-phosphate. Arg-17 is a 3-amino-2-oxopropyl phosphate binding site. His-42 (proton acceptor) is an active-site residue. 2 residues coordinate 1-deoxy-D-xylulose 5-phosphate: Arg-44 and His-49. Glu-69 acts as the Proton acceptor in catalysis. Thr-99 is a 1-deoxy-D-xylulose 5-phosphate binding site. The active-site Proton donor is the His-190. 3-amino-2-oxopropyl phosphate-binding positions include Gly-191 and 212–213 (GH).

Belongs to the PNP synthase family. In terms of assembly, homooctamer; tetramer of dimers.

Its subcellular location is the cytoplasm. It catalyses the reaction 3-amino-2-oxopropyl phosphate + 1-deoxy-D-xylulose 5-phosphate = pyridoxine 5'-phosphate + phosphate + 2 H2O + H(+). It functions in the pathway cofactor biosynthesis; pyridoxine 5'-phosphate biosynthesis; pyridoxine 5'-phosphate from D-erythrose 4-phosphate: step 5/5. Functionally, catalyzes the complicated ring closure reaction between the two acyclic compounds 1-deoxy-D-xylulose-5-phosphate (DXP) and 3-amino-2-oxopropyl phosphate (1-amino-acetone-3-phosphate or AAP) to form pyridoxine 5'-phosphate (PNP) and inorganic phosphate. The chain is Pyridoxine 5'-phosphate synthase from Pseudomonas putida (strain ATCC 700007 / DSM 6899 / JCM 31910 / BCRC 17059 / LMG 24140 / F1).